Consider the following 186-residue polypeptide: Large ribosomal subunit protein uL10 (186 aa).

The protein belongs to the universal ribosomal protein uL10 family. In terms of assembly, part of the ribosomal stalk of the 50S ribosomal subunit. The N-terminus interacts with L11 and the large rRNA to form the base of the stalk. The C-terminus forms an elongated spine to which L12 dimers bind in a sequential fashion forming a multimeric L10(L12)X complex.

In terms of biological role, forms part of the ribosomal stalk, playing a central role in the interaction of the ribosome with GTP-bound translation factors. The protein is Large ribosomal subunit protein uL10 of Rhodococcus jostii (strain RHA1).